Here is a 76-residue protein sequence, read N- to C-terminus: Kappa-actitoxin-Avd4n (76 aa).

The signal sequence occupies residues 1–19; that stretch reads MNKAFFLCLVVLCAAVVFA. A propeptide spanning residues 20 to 31 is cleaved from the precursor; it reads AEDLQKGKHAPF. Disulfide bonds link Cys-37-Cys-72 and Cys-39-Cys-65.

The protein belongs to the sea anemone type 3 (BDS) potassium channel toxin family. Post-translationally, lacks the conventional Cys residue at position 55. Thus, only 2 disulfide are possible present. As to expression, experimental results show no expression in the ectodermal tissue from the distal and proximal tentacles, body wall, and oral disk. Since paralogs are expressed in this tissue, an expression of this toxin in this tissue is probable. The negative results could be explained by the very low abundance of EST sequences.

It is found in the secreted. The protein resides in the nematocyst. Functionally, blocks Kv3 voltage-gated potassium channels. Reduces blood pressure. The sequence is that of Kappa-actitoxin-Avd4n from Anemonia viridis (Snakelocks anemone).